The primary structure comprises 346 residues: L-threonine dehydratase catabolic TdcB (346 aa).

An AMP-binding site is contributed by 59–60 (FT). Lysine 64 is modified (N6-(pyridoxal phosphate)lysine). AMP-binding positions include glutamine 94, 125-126 (GY), and asparagine 321.

Belongs to the serine/threonine dehydratase family. As to quaternary structure, in the native structure, TdcB is in a dimeric form, whereas in the TdcB-AMP complex, it exists in a tetrameric form (dimer of dimers). Pyridoxal 5'-phosphate is required as a cofactor.

The enzyme catalyses L-threonine = 2-oxobutanoate + NH4(+). It functions in the pathway amino-acid degradation; L-threonine degradation via propanoate pathway; propanoate from L-threonine: step 1/4. With respect to regulation, each protein molecule can bind up to four molecules of AMP, which act as an allosteric activator to the enzyme. Its function is as follows. Catalyzes the anaerobic formation of alpha-ketobutyrate and ammonia from threonine in a two-step reaction. The first step involved a dehydration of threonine and a production of enamine intermediates (aminocrotonate), which tautomerizes to its imine form (iminobutyrate). Both intermediates are unstable and short-lived. The second step is the nonenzymatic hydrolysis of the enamine/imine intermediates to form 2-ketobutyrate and free ammonia. In the low water environment of the cell, the second step is accelerated by RidA. This Staphylococcus aureus (strain Mu50 / ATCC 700699) protein is L-threonine dehydratase catabolic TdcB (tdcB).